The primary structure comprises 573 residues: Dilute domain-containing protein SPAC25B8.08 (573 aa).

One can recognise a Dilute domain in the interval 180–464; the sequence is NAFLCEVNQV…LKKLDAFHEE (285 aa).

The protein localises to the cytoplasm. It is found in the golgi apparatus. The chain is Dilute domain-containing protein SPAC25B8.08 from Schizosaccharomyces pombe (strain 972 / ATCC 24843) (Fission yeast).